The following is a 640-amino-acid chain: 1-deoxy-D-xylulose-5-phosphate synthase (640 aa).

Thiamine diphosphate is bound by residues His-78 and 119-121 (GHS). Residue Asp-151 participates in Mg(2+) binding. Residues 152–153 (GA), Asn-180, Tyr-289, and Glu-371 contribute to the thiamine diphosphate site. Asn-180 provides a ligand contact to Mg(2+).

Belongs to the transketolase family. DXPS subfamily. In terms of assembly, homodimer. Requires Mg(2+) as cofactor. It depends on thiamine diphosphate as a cofactor.

It catalyses the reaction D-glyceraldehyde 3-phosphate + pyruvate + H(+) = 1-deoxy-D-xylulose 5-phosphate + CO2. Its pathway is metabolic intermediate biosynthesis; 1-deoxy-D-xylulose 5-phosphate biosynthesis; 1-deoxy-D-xylulose 5-phosphate from D-glyceraldehyde 3-phosphate and pyruvate: step 1/1. Catalyzes the acyloin condensation reaction between C atoms 2 and 3 of pyruvate and glyceraldehyde 3-phosphate to yield 1-deoxy-D-xylulose-5-phosphate (DXP). This Bartonella quintana (strain Toulouse) (Rochalimaea quintana) protein is 1-deoxy-D-xylulose-5-phosphate synthase.